The primary structure comprises 468 residues: UDP-N-acetylmuramate--L-alanine ligase (468 aa).

ATP is bound at residue 112–118; the sequence is GTHGKTT.

Belongs to the MurCDEF family.

It is found in the cytoplasm. The enzyme catalyses UDP-N-acetyl-alpha-D-muramate + L-alanine + ATP = UDP-N-acetyl-alpha-D-muramoyl-L-alanine + ADP + phosphate + H(+). The protein operates within cell wall biogenesis; peptidoglycan biosynthesis. Its function is as follows. Cell wall formation. The sequence is that of UDP-N-acetylmuramate--L-alanine ligase from Bordetella petrii (strain ATCC BAA-461 / DSM 12804 / CCUG 43448).